Reading from the N-terminus, the 258-residue chain is Indole-3-glycerol phosphate synthase (258 aa).

The protein belongs to the TrpC family.

It catalyses the reaction 1-(2-carboxyphenylamino)-1-deoxy-D-ribulose 5-phosphate + H(+) = (1S,2R)-1-C-(indol-3-yl)glycerol 3-phosphate + CO2 + H2O. It functions in the pathway amino-acid biosynthesis; L-tryptophan biosynthesis; L-tryptophan from chorismate: step 4/5. The sequence is that of Indole-3-glycerol phosphate synthase from Exiguobacterium sibiricum (strain DSM 17290 / CCUG 55495 / CIP 109462 / JCM 13490 / 255-15).